The chain runs to 334 residues: Leukocyte cell-derived chemotaxin 1 (334 aa).

A helical transmembrane segment spans residues 46–66; the sequence is VVLISGAVLLLFGAIGAFYFW. Positions 105 to 201 constitute a BRICHOS domain; sequence GSGAEEAIEV…FCGDLPIFWL (97 aa). Cys132 and Cys193 form a disulfide bridge. The propeptide occupies 211-214; sequence RERR. A disordered region spans residues 212-268; sequence ERREVVRSSAPSTTRRPHSEPRGNAGPGRLSNRTRPSVQDDEEPFNPDNPYHQQEGE. N-linked (GlcNAc...) asparagine glycosylation is present at Asn243. Intrachain disulfides connect Cys282/Cys286, Cys283/Cys323, Cys293/Cys317, and Cys297/Cys313.

The protein belongs to the chondromodulin-1 family. In terms of processing, after cleavage, the post-translationally modified ChM-I is secreted as a glycoprotein. As to expression, detected in cartilage, cardiac valves and valvular interstitial cells (at protein level). Expressed in eye.

It localises to the secreted. It is found in the extracellular space. The protein resides in the extracellular matrix. Its subcellular location is the endomembrane system. Bifunctional growth regulator that stimulates the growth of cultured chondrocytes in the presence of basic fibroblast growth factor (FGF) but inhibits the growth of cultured vascular endothelial cells. May contribute to the rapid growth of cartilage and vascular invasion prior to the replacement of cartilage by bone during endochondral bone development. Inhibits in vitro tube formation and mobilization of endothelial cells. Plays a role as antiangiogenic factor in cardiac valves to suppress neovascularization. The polypeptide is Leukocyte cell-derived chemotaxin 1 (Rattus norvegicus (Rat)).